A 231-amino-acid chain; its full sequence is Uracil-DNA glycosylase (231 aa).

D70 functions as the Proton acceptor in the catalytic mechanism.

This sequence belongs to the uracil-DNA glycosylase (UDG) superfamily. UNG family.

The protein localises to the cytoplasm. The catalysed reaction is Hydrolyzes single-stranded DNA or mismatched double-stranded DNA and polynucleotides, releasing free uracil.. Functionally, excises uracil residues from the DNA which can arise as a result of misincorporation of dUMP residues by DNA polymerase or due to deamination of cytosine. This is Uracil-DNA glycosylase from Campylobacter curvus (strain 525.92).